Here is a 312-residue protein sequence, read N- to C-terminus: Pantothenate kinase (312 aa).

ATP is bound at residue 97-104 (GSVAVGKS).

Belongs to the prokaryotic pantothenate kinase family.

It is found in the cytoplasm. The catalysed reaction is (R)-pantothenate + ATP = (R)-4'-phosphopantothenate + ADP + H(+). Its pathway is cofactor biosynthesis; coenzyme A biosynthesis; CoA from (R)-pantothenate: step 1/5. The chain is Pantothenate kinase from Mycolicibacterium gilvum (strain PYR-GCK) (Mycobacterium gilvum (strain PYR-GCK)).